Consider the following 96-residue polypeptide: Co-chaperonin GroES (96 aa).

This sequence belongs to the GroES chaperonin family. In terms of assembly, heptamer of 7 subunits arranged in a ring. Interacts with the chaperonin GroEL.

The protein resides in the cytoplasm. Its function is as follows. Together with the chaperonin GroEL, plays an essential role in assisting protein folding. The GroEL-GroES system forms a nano-cage that allows encapsulation of the non-native substrate proteins and provides a physical environment optimized to promote and accelerate protein folding. GroES binds to the apical surface of the GroEL ring, thereby capping the opening of the GroEL channel. The chain is Co-chaperonin GroES from Shewanella piezotolerans (strain WP3 / JCM 13877).